Here is a 265-residue protein sequence, read N- to C-terminus: Undecaprenyl-diphosphatase (265 aa).

8 consecutive transmembrane segments (helical) span residues 7 to 27 (IIVS…PISS), 45 to 65 (TKIL…YFFH), 86 to 106 (LHII…YKKI), 108 to 128 (LLFN…FLLI), 145 to 165 (ISLL…YPGF), 186 to 206 (IEFS…YDFI), 214 to 234 (ILDL…SILC), and 245 to 265 (TSLI…YFIN).

It belongs to the UppP family.

It is found in the cell membrane. It carries out the reaction di-trans,octa-cis-undecaprenyl diphosphate + H2O = di-trans,octa-cis-undecaprenyl phosphate + phosphate + H(+). Functionally, catalyzes the dephosphorylation of undecaprenyl diphosphate (UPP). Confers resistance to bacitracin. This is Undecaprenyl-diphosphatase from Buchnera aphidicola subsp. Acyrthosiphon pisum (strain Tuc7).